A 217-amino-acid chain; its full sequence is Large ribosomal subunit protein uL1 (217 aa).

N6,N6-dimethyllysine; alternate is present on Lys122. Lys122 is subject to N6-methyllysine; alternate.

This sequence belongs to the universal ribosomal protein uL1 family.

This chain is Large ribosomal subunit protein uL1 (rpl10a), found in Dictyostelium discoideum (Social amoeba).